The following is a 222-amino-acid chain: Iodotyrosine deiodinase (222 aa).

Residues 34–38 and 61–62 contribute to the FMN site; these read RRTVR and PS. Glu-91, Tyr-95, and Lys-116 together coordinate 3-iodo-L-tyrosine. FMN contacts are provided by residues 171-173 and Arg-212; that span reads THT.

It belongs to the nitroreductase family. Homodimer. It depends on FMN as a cofactor.

It carries out the reaction 2 iodide + L-tyrosine + 2 NADP(+) = 3,5-diiodo-L-tyrosine + 2 NADPH + H(+). The enzyme catalyses iodide + L-tyrosine + NADP(+) = 3-iodo-L-tyrosine + NADPH. It catalyses the reaction 3-iodo-L-tyrosine + iodide + NADP(+) = 3,5-diiodo-L-tyrosine + NADPH + H(+). The catalysed reaction is L-tyrosine + chloride + NADP(+) = 3-chloro-L-tyrosine + NADPH. It carries out the reaction bromide + L-tyrosine + NADP(+) = 3-bromo-L-tyrosine + NADPH. Functionally, catalyzes the dehalogenation of halotyrosines such as 3-iodo-L-tyrosine and 3,5-diiodo-L-tyrosine. Likely to also catalyze the dehalogenation of other halotyrosines such as 3-bromo-L-tyrosine, 3-chloro-L-tyrosine and 3-iodo-L-tyrosine. Activity towards 3-iodo-L-tyrosine is much stronger than activity towards 3,5-diiodo-L-tyrosine and 2-iodophenol. The sequence is that of Iodotyrosine deiodinase from Haliscomenobacter hydrossis (strain ATCC 27775 / DSM 1100 / LMG 10767 / O).